An 84-amino-acid chain; its full sequence is Small ribosomal subunit protein bS20 (84 aa).

The protein belongs to the bacterial ribosomal protein bS20 family.

In terms of biological role, binds directly to 16S ribosomal RNA. This chain is Small ribosomal subunit protein bS20, found in Limosilactobacillus fermentum (strain NBRC 3956 / LMG 18251) (Lactobacillus fermentum).